A 635-amino-acid chain; its full sequence is Threonine--tRNA ligase (635 aa).

Residues 1–61 (MIKITLKDGK…HKDSSLEILT (61 aa)) form the TGS domain. Positions 242–532 (DHRKLGKELD…LIEQYAGAFP (291 aa)) are catalytic. Cysteine 333, histidine 384, and histidine 509 together coordinate Zn(2+).

Belongs to the class-II aminoacyl-tRNA synthetase family. Homodimer. Requires Zn(2+) as cofactor.

It localises to the cytoplasm. The catalysed reaction is tRNA(Thr) + L-threonine + ATP = L-threonyl-tRNA(Thr) + AMP + diphosphate + H(+). In terms of biological role, catalyzes the attachment of threonine to tRNA(Thr) in a two-step reaction: L-threonine is first activated by ATP to form Thr-AMP and then transferred to the acceptor end of tRNA(Thr). Also edits incorrectly charged L-seryl-tRNA(Thr). This chain is Threonine--tRNA ligase, found in Clostridium botulinum (strain Okra / Type B1).